The chain runs to 2479 residues: Centrosomal protein of 290 kDa (2479 aa).

The segment at Met1–Phe695 is self-association (with itself or C-terminus). Coiled coils occupy residues Met59–Lys565, Ser598–Asp664, Ala697–Lys931, Ser958–Ala1027, Gln1071–Arg1498, His1533–Leu1584, and Asp1635–Leu2452. Over residues Ala149 to Arg163 the composition is skewed to basic and acidic residues. Residues Ala149–Arg168 are disordered. The segment at Asp696 to Leu896 is interaction with IQCB1. The interval Thr1966–Tyr2479 is self-association (with itself or N-terminus). The segment at Ser2458–Tyr2479 is disordered.

In terms of assembly, part of the tectonic-like complex (also named B9 complex). Interacts with ATF4 via its N-terminal region. Associates with the BBSome complex, interacting (via N-terminus) with BBS4. Interacts with IQCB1/NPHP5; IQCB1 and CEP290/NPHP6 are proposed to form a functional NPHP5-6 module localized to the centrosome. Interacts with NPHP4; the interaction likely requires additional interactors. Interacts with ZNF423, FAM161A, CEP162, CEP162, CEP131, TALPID3, CCDC13, CC2D2A, RPGRIP1. Can self-associate (homo- or heteromeric). Interacts with CCP110; required for suppressing cilia formation. Interacts with RPGR. Associates (via C-terminus) with microtubules; association to microtubule is reduced in response to cellular stress, such as ultraviolet light (UV) radiation or heat shock, in a process that requires p38 MAP kinase signaling. Interacts with FAM161A. Interacts with PCM1. Interacts with CCDC66. Interacts with ARMC9 and CSPP1. In terms of processing, ubiquitinated. May undergo monoubiquitination; monoubiquitination is inhibited in response to cellular stress, such as ultraviolet light (UV) radiation or heat shock, but does not cause its displacement from centriolar satellites. In terms of tissue distribution, ubiquitous. Expressed strongly in placenta and weakly in brain.

Its subcellular location is the cytoplasm. It localises to the cytoskeleton. It is found in the microtubule organizing center. The protein localises to the centrosome. The protein resides in the centriolar satellite. Its subcellular location is the nucleus. It localises to the cell projection. It is found in the cilium. The protein localises to the cilium basal body. The protein resides in the centriole. Its subcellular location is the cytoplasmic vesicle. Functionally, involved in early and late steps in cilia formation. Its association with CCP110 is required for inhibition of primary cilia formation by CCP110. May play a role in early ciliogenesis in the disappearance of centriolar satellites and in the transition of primary ciliar vesicles (PCVs) to capped ciliary vesicles (CCVs). Required for the centrosomal recruitment of RAB8A and for the targeting of centriole satellite proteins to centrosomes such as of PCM1. Required for the correct localization of ciliary and phototransduction proteins in retinal photoreceptor cells; may play a role in ciliary transport processes. Required for efficient recruitment of RAB8A to primary cilium. In the ciliary transition zone is part of the tectonic-like complex which is required for tissue-specific ciliogenesis and may regulate ciliary membrane composition. Involved in regulation of the BBSome complex integrity, specifically for presence of BBS2, BBS5 and BBS8/TTC8 in the complex, and in ciliary targeting of selected BBSome cargos. May play a role in controlling entry of the BBSome complex to cilia possibly implicating IQCB1/NPHP5. Activates ATF4-mediated transcription. In Homo sapiens (Human), this protein is Centrosomal protein of 290 kDa (CEP290).